Here is a 192-residue protein sequence, read N- to C-terminus: GTP-dependent dephospho-CoA kinase (192 aa).

6 residues coordinate GTP: aspartate 49, valine 50, valine 51, aspartate 68, lysine 70, and glutamate 127.

Belongs to the GTP-dependent DPCK family.

It carries out the reaction 3'-dephospho-CoA + GTP = GDP + CoA + H(+). The protein operates within cofactor biosynthesis; coenzyme A biosynthesis. In terms of biological role, catalyzes the GTP-dependent phosphorylation of the 3'-hydroxyl group of dephosphocoenzyme A to form coenzyme A (CoA). This chain is GTP-dependent dephospho-CoA kinase, found in Halorubrum lacusprofundi (strain ATCC 49239 / DSM 5036 / JCM 8891 / ACAM 34).